We begin with the raw amino-acid sequence, 426 residues long: Endoglucanase (426 aa).

An N-terminal signal peptide occupies residues 1-19 (MRRCMPLVAASVAALMLAG). The N-palmitoyl cysteine moiety is linked to residue Cys-20. A lipid anchor (S-diacylglycerol cysteine) is attached at Cys-20. The propeptide occupies 20-45 (CGGGDGDPSLSTASVSATDTTTLKPA). Glu-249 acts as the Proton donor in catalysis. Glu-361 functions as the Nucleophile in the catalytic mechanism.

This sequence belongs to the glycosyl hydrolase 5 (cellulase A) family.

The protein resides in the cell membrane. The catalysed reaction is Endohydrolysis of (1-&gt;4)-beta-D-glucosidic linkages in cellulose, lichenin and cereal beta-D-glucans.. This is Endoglucanase (egl) from Ralstonia solanacearum (Pseudomonas solanacearum).